A 308-amino-acid polypeptide reads, in one-letter code: MATIQAFWRFSRPHTIIGTTLSVWAVYLLTILGDGNSVNSPASLDLVFGAWLACLLGNVYIVGLNQLWDVDIDRINKPNLPLANGDFSIAQGRWIVGLCGVASLAIAWGLGLWLGLTVGISLIIGTAYSVPPVRLKRFSLLAALCILTVRGIVVNLGLFLFFRIGLGYPPTLITPIWVLTLFILVFTVAIAIFKDVPDMEGDRQFKIQTLTLQIGKQNVFRGTLILLTGCYLAMAIWGLWAAMPLNTAFLIVSHLCLLALLWWRSRDVHLESKTEIASFYQFIWKLFFLEYLLYPLALWLPNFSNTIF.

8 helical membrane-spanning segments follow: residues 13 to 33 (PHTI…TILG), 44 to 64 (LDLV…IVGL), 104 to 124 (LAIA…SLII), 142 to 162 (AALC…FLFF), 173 to 193 (ITPI…IAIF), 219 to 241 (VFRG…GLWA), 245 to 263 (LNTA…LLWW), and 279 to 299 (FYQF…LALW).

This sequence belongs to the UbiA prenyltransferase family.

Its subcellular location is the membrane. The enzyme catalyses phytyl diphosphate + homogentisate + H(+) = 2-methyl-6-phytyl-1,4-benzene-1,4-diol + CO2 + diphosphate. The protein operates within cofactor biosynthesis; tocopherol biosynthesis. Its function is as follows. Involved in the synthesis of tocopherol (vitamin E). Catalyzes the condensation of homogentisate and phytyl diphosphate to form dimethylphytylhydrquinone. This Synechocystis sp. (strain ATCC 27184 / PCC 6803 / Kazusa) protein is Homogentisate phytyltransferase.